Here is a 450-residue protein sequence, read N- to C-terminus: Allergen Fus c 3 (450 aa).

Disordered stretches follow at residues E18 to Q87, D99 to P148, S185 to E377, and Q398 to S426. Positions P31–T46 are enriched in polar residues. The segment covering H101–G112 has biased composition (low complexity). Basic and acidic residues predominate over residues A113–R125. The span at R272 to P286 shows a compositional bias: basic residues. Residues D291–T304 are compositionally biased toward polar residues. Positions A305 to S341 are enriched in low complexity. The segment covering T356–E377 has biased composition (basic and acidic residues). Residues R368–L441 enclose the bHLH domain.

The protein is Allergen Fus c 3 of Fusarium culmorum.